The sequence spans 244 residues: Secreted RxLR effector protein RXLR-C05 (244 aa).

The signal sequence occupies residues 1 to 21 (MRGAFYVATAFLIASSTRTAA). Residues 37–46 (LPVGDSDTKS) are compositionally biased toward basic and acidic residues. Residues 37 to 56 (LPVGDSDTKSLPRRSLKGSG) are disordered. The RxLR-dEER signature appears at 50–68 (RSLKGSGDRLEIPVAEEER).

The protein belongs to the RxLR effector family.

It localises to the secreted. The protein localises to the host cytoplasm. The protein resides in the host nucleus. Its function is as follows. Secreted effector that suppresses pattern-triggered immunity (PTI) in plant host. This is Secreted RxLR effector protein RXLR-C05 from Plasmopara halstedii (Downy mildew of sunflower).